The chain runs to 151 residues: MATLESRLADMLKVPVEALGFQLWGIEYVQAGKHSILRVFIDGENGINIEDCANVSRQVSAVLDVEDPISTEYTLEVSSPGVDRPLFTAEQYAAYVGEDVKLQLTMPVAGSRNLKGAITQVDGQMLSVNVNGKELVVALDNIRKGNIIAKF.

The protein belongs to the RimP family.

The protein localises to the cytoplasm. In terms of biological role, required for maturation of 30S ribosomal subunits. The protein is Ribosome maturation factor RimP of Shewanella oneidensis (strain ATCC 700550 / JCM 31522 / CIP 106686 / LMG 19005 / NCIMB 14063 / MR-1).